A 291-amino-acid chain; its full sequence is UPF0173 metal-dependent hydrolase Rmet_5695 (291 aa).

It belongs to the UPF0173 family.

The protein is UPF0173 metal-dependent hydrolase Rmet_5695 of Cupriavidus metallidurans (strain ATCC 43123 / DSM 2839 / NBRC 102507 / CH34) (Ralstonia metallidurans).